A 258-amino-acid polypeptide reads, in one-letter code: Tryptophan synthase alpha chain (258 aa).

Catalysis depends on proton acceptor residues Glu-52 and Asp-63.

The protein belongs to the TrpA family. Tetramer of two alpha and two beta chains.

The enzyme catalyses (1S,2R)-1-C-(indol-3-yl)glycerol 3-phosphate + L-serine = D-glyceraldehyde 3-phosphate + L-tryptophan + H2O. Its pathway is amino-acid biosynthesis; L-tryptophan biosynthesis; L-tryptophan from chorismate: step 5/5. The alpha subunit is responsible for the aldol cleavage of indoleglycerol phosphate to indole and glyceraldehyde 3-phosphate. In Streptococcus pneumoniae serotype 2 (strain D39 / NCTC 7466), this protein is Tryptophan synthase alpha chain.